The chain runs to 616 residues: Cytochrome c oxidase subunit 1 (616 aa).

The helical transmembrane segment at 28-48 (HLYLISGGFFFLLGGLEALFI) threads the bilayer. Residue His72 coordinates Fe(II)-heme a. 6 helical membrane-spanning segments follow: residues 75-95 (TMIF…VVPL), 102-122 (VAFP…GLFL), 158-178 (GLQI…VTII), 198-218 (FVTS…LIFM), 243-263 (LFWV…FGIF), and 275-295 (LFGY…GFMV). Residues His249 and Tyr253 each contribute to the Cu cation site. Positions 249–253 (HPEVY) form a cross-link, 1'-histidyl-3'-tyrosine (His-Tyr). Cu cation-binding residues include His298 and His299. Helical transmembrane passes span 303-323 (VGMG…IAVP), 349-369 (AVAF…LASA), 380-400 (FVVA…LLAG), 420-440 (ITFW…HFLG), 463-483 (ISTI…INIV), 553-573 (SSFL…GFTY), and 577-597 (AGWG…SMFL). His384 is a Fe(II)-heme o binding site. His384 contributes to the heme a3 binding site. His386 is a Fe(II)-heme a binding site.

It belongs to the heme-copper respiratory oxidase family. The cofactor is Cu(2+). Heme serves as cofactor.

The protein localises to the cell membrane. The catalysed reaction is 4 Fe(II)-[cytochrome c] + O2 + 8 H(+)(in) = 4 Fe(III)-[cytochrome c] + 2 H2O + 4 H(+)(out). It participates in energy metabolism; oxidative phosphorylation. Functionally, cytochrome c oxidase is the component of the respiratory chain that catalyzes the reduction of oxygen to water. Subunits 1-3 form the functional core of the enzyme complex. Co I is the catalytic subunit of the enzyme. Electrons originating in cytochrome c are transferred via the copper A center of subunit 2 and heme a of subunit 1 to the bimetallic center formed by heme a3 and copper B. This cytochrome c oxidase shows proton pump activity across the membrane in addition to the electron transfer. This Bacillus sp. (strain PS3) protein is Cytochrome c oxidase subunit 1 (ctaD).